Consider the following 217-residue polypeptide: 3,4-dihydroxy-2-butanone 4-phosphate synthase (217 aa).

D-ribulose 5-phosphate is bound by residues 37–38, aspartate 42, 150–154, and glutamate 174; these read RE and RRGHT. Glutamate 38 is a binding site for Mg(2+). Mg(2+) is bound at residue histidine 153.

It belongs to the DHBP synthase family. In terms of assembly, homodimer. The cofactor is Mg(2+). Requires Mn(2+) as cofactor.

The enzyme catalyses D-ribulose 5-phosphate = (2S)-2-hydroxy-3-oxobutyl phosphate + formate + H(+). The protein operates within cofactor biosynthesis; riboflavin biosynthesis; 2-hydroxy-3-oxobutyl phosphate from D-ribulose 5-phosphate: step 1/1. Functionally, catalyzes the conversion of D-ribulose 5-phosphate to formate and 3,4-dihydroxy-2-butanone 4-phosphate. The polypeptide is 3,4-dihydroxy-2-butanone 4-phosphate synthase (Shewanella baltica (strain OS155 / ATCC BAA-1091)).